Consider the following 205-residue polypeptide: N-(5'-phosphoribosyl)anthranilate isomerase (205 aa).

The protein belongs to the TrpF family.

The enzyme catalyses N-(5-phospho-beta-D-ribosyl)anthranilate = 1-(2-carboxyphenylamino)-1-deoxy-D-ribulose 5-phosphate. The protein operates within amino-acid biosynthesis; L-tryptophan biosynthesis; L-tryptophan from chorismate: step 3/5. The sequence is that of N-(5'-phosphoribosyl)anthranilate isomerase from Maridesulfovibrio salexigens (strain ATCC 14822 / DSM 2638 / NCIMB 8403 / VKM B-1763) (Desulfovibrio salexigens).